Here is a 219-residue protein sequence, read N- to C-terminus: Probable nicotinate-nucleotide adenylyltransferase (219 aa).

This sequence belongs to the NadD family.

It carries out the reaction nicotinate beta-D-ribonucleotide + ATP + H(+) = deamido-NAD(+) + diphosphate. It participates in cofactor biosynthesis; NAD(+) biosynthesis; deamido-NAD(+) from nicotinate D-ribonucleotide: step 1/1. Its function is as follows. Catalyzes the reversible adenylation of nicotinate mononucleotide (NaMN) to nicotinic acid adenine dinucleotide (NaAD). In Pseudomonas putida (strain GB-1), this protein is Probable nicotinate-nucleotide adenylyltransferase.